Consider the following 547-residue polypeptide: Chaperonin GroEL (547 aa).

Residues 29–32, Lys50, 86–90, Gly414, and Asp495 each bind ATP; these read TLGP and DGTTT. Positions 525–547 are disordered; that stretch reads PSDKEDSIPPMRGGMGGMGGMDF. Over residues 537-547 the composition is skewed to gly residues; that stretch reads GGMGGMGGMDF.

It belongs to the chaperonin (HSP60) family. In terms of assembly, forms a cylinder of 14 subunits composed of two heptameric rings stacked back-to-back. Interacts with the co-chaperonin GroES.

The protein localises to the cytoplasm. The enzyme catalyses ATP + H2O + a folded polypeptide = ADP + phosphate + an unfolded polypeptide.. Functionally, together with its co-chaperonin GroES, plays an essential role in assisting protein folding. The GroEL-GroES system forms a nano-cage that allows encapsulation of the non-native substrate proteins and provides a physical environment optimized to promote and accelerate protein folding. This is Chaperonin GroEL from Rickettsia felis (strain ATCC VR-1525 / URRWXCal2) (Rickettsia azadi).